Reading from the N-terminus, the 310-residue chain is Tagatose-6-phosphate kinase (310 aa).

Belongs to the carbohydrate kinase PfkB family. LacC subfamily.

It catalyses the reaction D-tagatofuranose 6-phosphate + ATP = D-tagatofuranose 1,6-bisphosphate + ADP + H(+). Its pathway is carbohydrate metabolism; D-tagatose 6-phosphate degradation; D-glyceraldehyde 3-phosphate and glycerone phosphate from D-tagatose 6-phosphate: step 1/2. This chain is Tagatose-6-phosphate kinase, found in Streptococcus agalactiae serotype Ia (strain ATCC 27591 / A909 / CDC SS700).